Consider the following 212-residue polypeptide: Phosphatidylserine decarboxylase proenzyme (212 aa).

S182 serves as the catalytic Schiff-base intermediate with substrate; via pyruvic acid. A Pyruvic acid (Ser); by autocatalysis modification is found at S182.

This sequence belongs to the phosphatidylserine decarboxylase family. PSD-A subfamily. Heterodimer of a large membrane-associated beta subunit and a small pyruvoyl-containing alpha subunit. It depends on pyruvate as a cofactor. In terms of processing, is synthesized initially as an inactive proenzyme. Formation of the active enzyme involves a self-maturation process in which the active site pyruvoyl group is generated from an internal serine residue via an autocatalytic post-translational modification. Two non-identical subunits are generated from the proenzyme in this reaction, and the pyruvate is formed at the N-terminus of the alpha chain, which is derived from the carboxyl end of the proenzyme. The post-translation cleavage follows an unusual pathway, termed non-hydrolytic serinolysis, in which the side chain hydroxyl group of the serine supplies its oxygen atom to form the C-terminus of the beta chain, while the remainder of the serine residue undergoes an oxidative deamination to produce ammonia and the pyruvoyl prosthetic group on the alpha chain.

It localises to the cell membrane. It carries out the reaction a 1,2-diacyl-sn-glycero-3-phospho-L-serine + H(+) = a 1,2-diacyl-sn-glycero-3-phosphoethanolamine + CO2. Its pathway is phospholipid metabolism; phosphatidylethanolamine biosynthesis; phosphatidylethanolamine from CDP-diacylglycerol: step 2/2. In terms of biological role, catalyzes the formation of phosphatidylethanolamine (PtdEtn) from phosphatidylserine (PtdSer). The chain is Phosphatidylserine decarboxylase proenzyme from Paraburkholderia phytofirmans (strain DSM 17436 / LMG 22146 / PsJN) (Burkholderia phytofirmans).